A 390-amino-acid polypeptide reads, in one-letter code: MKVVLSYSGGLDTTVCIPLLKEKYGFDEVITVTVDIGQPEADIKQAEERGKKYADKHYTIDAKKEFVDSLFMLIKANGNYEGYVLGTALARPLIAEKVVEVAKKEGAEAVAHGCTGKGNDQLRFENIFRQHGFKVIAPVRELNLTREWEIEYARQHGIEVPATKEKPYSIDENLWSRSVEGGKLEDPSFEPPEDIYEWTASPEKAPDKPEIVKIDFEKGVPVALNDERMGGFELIKALNEIGGKHGVGRTDMIEDRVLGLKARENYEHPAATILITAHRDLENLVLSRRELKFKKFVEEEWAELVYYGLVNDPLFDALNAFIDKTQERVTGWVKVKLYKGSAVVVARNSPYALYSEELVSFDTESIDQRLAEGFAAFHGLQGRLFRRLFQ.

Position 6-14 (6-14) interacts with ATP; that stretch reads SYSGGLDTT. Tyrosine 83 provides a ligand contact to L-citrulline. ATP is bound at residue glycine 113. Threonine 115, asparagine 119, and aspartate 120 together coordinate L-aspartate. An L-citrulline-binding site is contributed by asparagine 119. Residues arginine 123, serine 169, serine 178, glutamate 254, and tyrosine 266 each contribute to the L-citrulline site.

The protein belongs to the argininosuccinate synthase family. Type 1 subfamily. Homotetramer.

It is found in the cytoplasm. The catalysed reaction is L-citrulline + L-aspartate + ATP = 2-(N(omega)-L-arginino)succinate + AMP + diphosphate + H(+). It participates in amino-acid biosynthesis; L-arginine biosynthesis; L-arginine from L-ornithine and carbamoyl phosphate: step 2/3. In Archaeoglobus fulgidus (strain ATCC 49558 / DSM 4304 / JCM 9628 / NBRC 100126 / VC-16), this protein is Argininosuccinate synthase.